Consider the following 1213-residue polypeptide: DNA-directed RNA polymerase subunit beta (1213 aa).

The segment at 1169 to 1213 is disordered; it reads SRMAEEQEKKKLAEETGKSGDKKENKKDADKPVAPADESDDKVSK. Residues 1171 to 1199 are compositionally biased toward basic and acidic residues; it reads MAEEQEKKKLAEETGKSGDKKENKKDADK.

The protein belongs to the RNA polymerase beta chain family. The RNAP catalytic core consists of 2 alpha, 1 beta, 1 beta' and 1 omega subunit. When a sigma factor is associated with the core the holoenzyme is formed, which can initiate transcription.

The catalysed reaction is RNA(n) + a ribonucleoside 5'-triphosphate = RNA(n+1) + diphosphate. DNA-dependent RNA polymerase catalyzes the transcription of DNA into RNA using the four ribonucleoside triphosphates as substrates. This chain is DNA-directed RNA polymerase subunit beta, found in Lactobacillus helveticus (strain DPC 4571).